The sequence spans 156 residues: Cyanate hydratase (156 aa).

Residues arginine 96, glutamate 99, and serine 122 contribute to the active site.

This sequence belongs to the cyanase family.

The catalysed reaction is cyanate + hydrogencarbonate + 3 H(+) = NH4(+) + 2 CO2. In terms of biological role, catalyzes the reaction of cyanate with bicarbonate to produce ammonia and carbon dioxide. The protein is Cyanate hydratase of Pseudomonas entomophila (strain L48).